The chain runs to 337 residues: MSGSPVKRQRMESALDQLKQFTTVVADTGDFNAIDEYKPQDATTNPSLILAAAQMPAYQELVEEALAYGKRLGGSQEEQVTNAVDKLFVLFGAEILKKIPGRVSTEVDARLSFDRDAMVARARRLIELYKEAGVSKDRVLIKLASTWEGIQAGKELEEQHGIHCNMTLLFSFAQAVACAEAGVTLISPFVGRILDWHVANTDQKSYEPLEDPGVKSVTKIYNYYKKFGYKTIVMGASFRNTGEIKALAGCDFLTISPQLLGELLKDTSKLVPMLSAKAAQASPLEKVHLDEKAFRWLHNEDRMAVEKLSDGIRKFAADAVKLERMLTERMFSTENGK.

The Nuclear localization signal motif lies at 1 to 10 (MSGSPVKRQR). Residue Lys-142 is the Schiff-base intermediate with substrate of the active site. Lys-219 bears the N6-acetyllysine mark. Phosphoserine is present on residues Ser-237 and Ser-256. An N6-acetyllysine mark is found at Lys-269, Lys-286, and Lys-321.

It belongs to the transaldolase family. Type 1 subfamily. In terms of assembly, homodimer. Interacts with KPNA1 and KPNA4.

Its subcellular location is the nucleus. It is found in the cytoplasm. The enzyme catalyses D-sedoheptulose 7-phosphate + D-glyceraldehyde 3-phosphate = D-erythrose 4-phosphate + beta-D-fructose 6-phosphate. The protein operates within carbohydrate degradation; pentose phosphate pathway; D-glyceraldehyde 3-phosphate and beta-D-fructose 6-phosphate from D-ribose 5-phosphate and D-xylulose 5-phosphate (non-oxidative stage): step 2/3. Its function is as follows. Catalyzes the rate-limiting step of the non-oxidative phase in the pentose phosphate pathway. Catalyzes the reversible conversion of sedheptulose-7-phosphate and D-glyceraldehyde 3-phosphate into erythrose-4-phosphate and beta-D-fructose 6-phosphate. This chain is Transaldolase (TALDO1), found in Sus scrofa (Pig).